The primary structure comprises 396 residues: Elongation factor Tu (396 aa).

The tr-type G domain occupies K10–E206. Residues G19–T26 form a G1 region. A GTP-binding site is contributed by G19–T26. T26 lines the Mg(2+) pocket. The G2 stretch occupies residues G60–S64. The tract at residues D81–G84 is G3. GTP is bound by residues D81 to H85 and N136 to D139. A G4 region spans residues N136–D139. A G5 region spans residues S174–L176.

This sequence belongs to the TRAFAC class translation factor GTPase superfamily. Classic translation factor GTPase family. EF-Tu/EF-1A subfamily. Monomer.

It is found in the cytoplasm. It catalyses the reaction GTP + H2O = GDP + phosphate + H(+). GTP hydrolase that promotes the GTP-dependent binding of aminoacyl-tRNA to the A-site of ribosomes during protein biosynthesis. This is Elongation factor Tu from Granulibacter bethesdensis (strain ATCC BAA-1260 / CGDNIH1).